Consider the following 70-residue polypeptide: UPF0352 protein PBPRA2586 (70 aa).

It belongs to the UPF0352 family.

The polypeptide is UPF0352 protein PBPRA2586 (Photobacterium profundum (strain SS9)).